The following is a 757-amino-acid chain: MDVNPTLLFLKVPAQNAISTTFPYTGDPPYSHGTGTGYTMDTVNRTHQYSERGKWTTNTETGAPQLNPIDGPLPEDNEPSGYAQTDCVLEAMAFLEESHPGIFENSCLETMEVIQQTRVDKLTQGRQTYDWTLNRNQPAATALANTIEVFRSNGLTANESGRLIDFLKDVIESMDKEEMEIITHFQRKRRVRDNMTKKMVTQRTIGKKKQRLNKRSYLIRALTLNTMTKDAERGKLKRRAIATPGMQIRGFVYFVETLARNICEKLEQSGLPVGGNEKKAKLANVVRKMMTNSQDTELSFTITGDNTKWNENQNPRMFLAMITYITRNQPEWFRNVLSIAPIMFSNKMARLGKGYMFESKSMKLRTQIPAEMLASIDLKYFNESTRKKIEKIRPLLIDGTASLSPGMMMGMFNMLSTVLGVSILNLGQKKYTKTTYWWDGLQSSDDFALIVNAPSHEGIQAGVNRFYRTCKLVGINMSKKKSYINRTGTFEFTSFFYRYGFVANFSMELPSFGVSGINESADMSIGVTVIKNNMINNDLGPATAQMALQLFIKDYRYTYRCHRGDTQIQTRRSFELKKLWEQTRSKAGLLVSDGGSNLYNIRNLHIPEVCLKWELMDEDYQGRLCNPLNPFVSHKEIESVNNAVVMPAHGPAKSMEYDAVATTHSWTPKRNRSILNTSQRGILEDEQMYQKCCNLFEKFFPSSSYRRPVGISSMVEAMVSRARIDARIDFESGRIKKEEFAEIMKICSTIEELRRQK.

Residues 52–82 (RGKWTTNTETGAPQLNPIDGPLPEDNEPSGY) are disordered. The span at 55 to 64 (WTTNTETGAP) shows a compositional bias: polar residues. 2 short sequence motifs (nuclear localization signal) span residues 187-195 (RKRRVRDNM) and 203-216 (RTIG…NKRS). A promoter-binding site region spans residues 249–256 (RGFVYFVE). Positions 286-483 (VRKMMTNSQD…GINMSKKKSY (198 aa)) constitute a RdRp catalytic domain.

This sequence belongs to the influenza viruses polymerase PB1 family. As to quaternary structure, influenza RNA polymerase is composed of three subunits: PB1, PB2 and PA. Interacts (via N-terminus) with PA (via C-terminus). Interacts (via C-terminus) with PB2 (via N-terminus); this interaction is essential for transcription initiation. In terms of processing, phosphorylated by host PRKCA.

It localises to the host nucleus. It is found in the host cytoplasm. It carries out the reaction RNA(n) + a ribonucleoside 5'-triphosphate = RNA(n+1) + diphosphate. In terms of biological role, RNA-dependent RNA polymerase which is responsible for replication and transcription of virus RNA segments. The transcription of viral mRNAs occurs by a unique mechanism called cap-snatching. 5' methylated caps of cellular mRNAs are cleaved after 10-13 nucleotides by PA. In turn, these short capped RNAs are used as primers by PB1 for transcription of viral mRNAs. During virus replication, PB1 initiates RNA synthesis and copy vRNA into complementary RNA (cRNA) which in turn serves as a template for the production of more vRNAs. This Aves (Human) protein is RNA-directed RNA polymerase catalytic subunit.